The primary structure comprises 89 residues: Small ribosomal subunit protein uS15 (89 aa).

Belongs to the universal ribosomal protein uS15 family. As to quaternary structure, part of the 30S ribosomal subunit. Forms a bridge to the 50S subunit in the 70S ribosome, contacting the 23S rRNA.

One of the primary rRNA binding proteins, it binds directly to 16S rRNA where it helps nucleate assembly of the platform of the 30S subunit by binding and bridging several RNA helices of the 16S rRNA. In terms of biological role, forms an intersubunit bridge (bridge B4) with the 23S rRNA of the 50S subunit in the ribosome. This Erwinia tasmaniensis (strain DSM 17950 / CFBP 7177 / CIP 109463 / NCPPB 4357 / Et1/99) protein is Small ribosomal subunit protein uS15.